The following is a 181-amino-acid chain: Protein GrpE (181 aa).

Residues 1 to 21 (MNKEQQDLQTEQEAAVETAEL) form a disordered region. The span at 8 to 21 (LQTEQEAAVETAEL) shows a compositional bias: low complexity.

It belongs to the GrpE family. In terms of assembly, homodimer.

The protein resides in the cytoplasm. Functionally, participates actively in the response to hyperosmotic and heat shock by preventing the aggregation of stress-denatured proteins, in association with DnaK and GrpE. It is the nucleotide exchange factor for DnaK and may function as a thermosensor. Unfolded proteins bind initially to DnaJ; upon interaction with the DnaJ-bound protein, DnaK hydrolyzes its bound ATP, resulting in the formation of a stable complex. GrpE releases ADP from DnaK; ATP binding to DnaK triggers the release of the substrate protein, thus completing the reaction cycle. Several rounds of ATP-dependent interactions between DnaJ, DnaK and GrpE are required for fully efficient folding. The chain is Protein GrpE from Trichlorobacter lovleyi (strain ATCC BAA-1151 / DSM 17278 / SZ) (Geobacter lovleyi).